Here is a 1465-residue protein sequence, read N- to C-terminus: DNA polymerase III PolC-type (1465 aa).

The region spanning 427-583 is the Exonuclease domain; that stretch reads YVVFDVETTG…YDAEATGRLL (157 aa).

This sequence belongs to the DNA polymerase type-C family. PolC subfamily.

It localises to the cytoplasm. The enzyme catalyses DNA(n) + a 2'-deoxyribonucleoside 5'-triphosphate = DNA(n+1) + diphosphate. Its function is as follows. Required for replicative DNA synthesis. This DNA polymerase also exhibits 3' to 5' exonuclease activity. This is DNA polymerase III PolC-type from Streptococcus pyogenes serotype M4 (strain MGAS10750).